We begin with the raw amino-acid sequence, 164 residues long: NADH-quinone oxidoreductase subunit I 1 (164 aa).

2 consecutive 4Fe-4S ferredoxin-type domains span residues 54–84 (LRRYPNGEERCIACKLCEAICPAQAITIEAG) and 95–124 (VRYDIDMVKCIYCGFCQEACPVDAIVEGPN). Positions 64, 67, 70, 74, 104, 107, 110, and 114 each coordinate [4Fe-4S] cluster.

This sequence belongs to the complex I 23 kDa subunit family. As to quaternary structure, NDH-1 is composed of 14 different subunits. Subunits NuoA, H, J, K, L, M, N constitute the membrane sector of the complex. [4Fe-4S] cluster is required as a cofactor.

It localises to the cell inner membrane. It carries out the reaction a quinone + NADH + 5 H(+)(in) = a quinol + NAD(+) + 4 H(+)(out). NDH-1 shuttles electrons from NADH, via FMN and iron-sulfur (Fe-S) centers, to quinones in the respiratory chain. The immediate electron acceptor for the enzyme in this species is believed to be ubiquinone. Couples the redox reaction to proton translocation (for every two electrons transferred, four hydrogen ions are translocated across the cytoplasmic membrane), and thus conserves the redox energy in a proton gradient. The polypeptide is NADH-quinone oxidoreductase subunit I 1 (Rhizobium meliloti (strain 1021) (Ensifer meliloti)).